The chain runs to 397 residues: Inositol 3-kinase (397 aa).

ATP contacts are provided by residues S228, G278–D281, and N305. D281 acts as the Proton acceptor in catalysis.

This sequence belongs to the carbohydrate kinase pfkB family. In terms of tissue distribution, expressed in roots, leaf blade shoots, leaf sheath shoots and panicles.

It catalyses the reaction myo-inositol + ATP = 1D-myo-inositol 3-phosphate + ADP + H(+). Its function is as follows. Kinase that phosphorylates myo-inositol to produce multiple myo-inositol monophosphates. Participates in phytic acid biosynthesis in developing seeds. Phytic acid is the primary storage form of phosphorus in cereal grains and other plant seeds. This chain is Inositol 3-kinase, found in Oryza sativa subsp. japonica (Rice).